We begin with the raw amino-acid sequence, 1231 residues long: Cohesin subunit SA-2 (1231 aa).

Methionine 1 carries the post-translational modification N-acetylmethionine. Residues 1–75 form a disordered region; the sequence is MIAAPEIPTD…GSNRMNGHHQ (75 aa). Basic residues predominate over residues 36 to 48; it reads KQGKGKTCKKGKK. One can recognise an SCD domain in the interval 293–378; that stretch reads FVHRYRDAIA…SRFKDRIVSM (86 aa). Lysine 607 is modified (N6-acetyllysine). Residues serine 1058, serine 1061, serine 1064, and serine 1065 each carry the phosphoserine modification. The disordered stretch occupies residues 1062 to 1087; sequence GMSSRGSTVRSKKSKPSTGKRKVVEG. Positions 1071–1082 are enriched in basic residues; the sequence is RSKKSKPSTGKR. The residue at position 1112 (threonine 1112) is a Phosphothreonine. Serine 1177 and serine 1178 each carry phosphoserine.

This sequence belongs to the SCC3 family. In terms of assembly, interacts directly with RAD21 in cohesin complex. Cohesin complexes are composed of a heterodimer between a SMC1 protein (SMC1A or SMC1B) and SMC3, which are attached via their hinge domain, and RAD21 which link them at their heads, and one STAG protein (STAG1, STAG2 or STAG3). In cohesin complexes, STAG2 is mutually exclusive with STAG1 and STAG3. Phosphorylated by PLK1. The large dissociation of cohesin from chromosome arms during prophase is partly due to its phosphorylation.

The protein localises to the nucleus. It localises to the chromosome. Its subcellular location is the centromere. Its function is as follows. Component of cohesin complex, a complex required for the cohesion of sister chromatids after DNA replication. The cohesin complex apparently forms a large proteinaceous ring within which sister chromatids can be trapped. At anaphase, the complex is cleaved and dissociates from chromatin, allowing sister chromatids to segregate. The cohesin complex may also play a role in spindle pole assembly during mitosis. The sequence is that of Cohesin subunit SA-2 (Stag2) from Mus musculus (Mouse).